Reading from the N-terminus, the 425-residue chain is Glutamyl-tRNA reductase (425 aa).

Residues 51 to 54 (TCNR), S111, 116 to 118 (DMQ), and Q122 contribute to the substrate site. Residue C52 is the Nucleophile of the active site. 191 to 196 (GLGEIG) provides a ligand contact to NADP(+).

Belongs to the glutamyl-tRNA reductase family. As to quaternary structure, homodimer.

It catalyses the reaction (S)-4-amino-5-oxopentanoate + tRNA(Glu) + NADP(+) = L-glutamyl-tRNA(Glu) + NADPH + H(+). It participates in porphyrin-containing compound metabolism; protoporphyrin-IX biosynthesis; 5-aminolevulinate from L-glutamyl-tRNA(Glu): step 1/2. In terms of biological role, catalyzes the NADPH-dependent reduction of glutamyl-tRNA(Glu) to glutamate 1-semialdehyde (GSA). The chain is Glutamyl-tRNA reductase from Cytophaga hutchinsonii (strain ATCC 33406 / DSM 1761 / CIP 103989 / NBRC 15051 / NCIMB 9469 / D465).